The chain runs to 484 residues: ATP synthase subunit beta, chloroplastic (484 aa).

ATP is bound at residue 163 to 170; the sequence is GGAGVGKT.

It belongs to the ATPase alpha/beta chains family. As to quaternary structure, F-type ATPases have 2 components, CF(1) - the catalytic core - and CF(0) - the membrane proton channel. CF(1) has five subunits: alpha(3), beta(3), gamma(1), delta(1), epsilon(1). CF(0) has four main subunits: a(1), b(1), b'(1) and c(9-12).

The protein resides in the plastid. It localises to the chloroplast thylakoid membrane. The enzyme catalyses ATP + H2O + 4 H(+)(in) = ADP + phosphate + 5 H(+)(out). In terms of biological role, produces ATP from ADP in the presence of a proton gradient across the membrane. The catalytic sites are hosted primarily by the beta subunits. This chain is ATP synthase subunit beta, chloroplastic, found in Stigeoclonium helveticum (Green alga).